A 204-amino-acid polypeptide reads, in one-letter code: Small ribosomal subunit protein uS4 (204 aa).

The tract at residues 1-46 (MSKRHSSKYKIDRRMGENIWGRPKSPVNRREYGPGQHGQRRRSKIS) is disordered. The S4 RNA-binding domain maps to 94–157 (RRLDMIVYRA…QEMALVLEAQ (64 aa)).

It belongs to the universal ribosomal protein uS4 family. As to quaternary structure, part of the 30S ribosomal subunit. Contacts protein S5. The interaction surface between S4 and S5 is involved in control of translational fidelity.

One of the primary rRNA binding proteins, it binds directly to 16S rRNA where it nucleates assembly of the body of the 30S subunit. Functionally, with S5 and S12 plays an important role in translational accuracy. The sequence is that of Small ribosomal subunit protein uS4 from Zymomonas mobilis subsp. mobilis (strain ATCC 31821 / ZM4 / CP4).